A 472-amino-acid polypeptide reads, in one-letter code: Ribosomal protein uS12 methylthiotransferase RimO (472 aa).

The 111-residue stretch at 33–143 folds into the MTTase N-terminal domain; it reads NRIGFVSLGC…VLKHVHKYVP (111 aa). Residues cysteine 42, cysteine 78, cysteine 107, cysteine 175, cysteine 179, and cysteine 182 each coordinate [4Fe-4S] cluster. In terms of domain architecture, Radical SAM core spans 161–398; it reads LTPKHYAYLK…MEVQAEISAE (238 aa). Residues 401-467 form the TRAM domain; sequence ARFVGRTLDI…EHDLWAEVVD (67 aa).

This sequence belongs to the methylthiotransferase family. RimO subfamily. [4Fe-4S] cluster is required as a cofactor.

It is found in the cytoplasm. It catalyses the reaction L-aspartate(89)-[ribosomal protein uS12]-hydrogen + (sulfur carrier)-SH + AH2 + 2 S-adenosyl-L-methionine = 3-methylsulfanyl-L-aspartate(89)-[ribosomal protein uS12]-hydrogen + (sulfur carrier)-H + 5'-deoxyadenosine + L-methionine + A + S-adenosyl-L-homocysteine + 2 H(+). Catalyzes the methylthiolation of an aspartic acid residue of ribosomal protein uS12. The polypeptide is Ribosomal protein uS12 methylthiotransferase RimO (Shewanella baltica (strain OS195)).